Consider the following 122-residue polypeptide: uncharacterized protein (122 aa).

Residues 97–122 (TSRNGFSNPNKDGKKNDDDNNSSSKS) form a disordered region.

This is an uncharacterized protein from Mycoplasma genitalium (strain ATCC 33530 / DSM 19775 / NCTC 10195 / G37) (Mycoplasmoides genitalium).